Here is a 212-residue protein sequence, read N- to C-terminus: Fe/S biogenesis protein NfuA (212 aa).

Residues C169 and C172 each contribute to the [4Fe-4S] cluster site.

This sequence belongs to the NfuA family. As to quaternary structure, homodimer. [4Fe-4S] cluster serves as cofactor.

Its function is as follows. Involved in iron-sulfur cluster biogenesis. Binds a 4Fe-4S cluster, can transfer this cluster to apoproteins, and thereby intervenes in the maturation of Fe/S proteins. Could also act as a scaffold/chaperone for damaged Fe/S proteins. This chain is Fe/S biogenesis protein NfuA, found in Acinetobacter baumannii (strain AB307-0294).